We begin with the raw amino-acid sequence, 544 residues long: Protein adenylyltransferase (544 aa).

The 154-residue stretch at 63–216 (FDTAYLCHIH…LEPMQHLFED (154 aa)) folds into the Fido domain. ATP contacts are provided by residues 93-94 (FA), 106-107 (RT), 163-167 (EGNGR), and R170.

Its subcellular location is the secreted. It catalyses the reaction L-tyrosyl-[protein] + ATP = O-(5'-adenylyl)-L-tyrosyl-[protein] + diphosphate. It carries out the reaction L-threonyl-[protein] + ATP = 3-O-(5'-adenylyl)-L-threonyl-[protein] + diphosphate. In terms of biological role, adenylyltransferase involved in virulence by mediating the addition of adenosine 5'-monophosphate (AMP) to specific residue of host target proteins. The sequence is that of Protein adenylyltransferase (bepA) from Bartonella henselae (strain ATCC 49882 / DSM 28221 / CCUG 30454 / Houston 1) (Rochalimaea henselae).